A 317-amino-acid chain; its full sequence is uncharacterized protein (317 aa).

Residues Ala11–Leu31 traverse the membrane as a helical segment. PASTA domains are found at residues Asn33–Lys100, Gly101–Lys174, and Asp180–Lys241.

Its subcellular location is the membrane. This is an uncharacterized protein from Borreliella burgdorferi (strain ATCC 35210 / DSM 4680 / CIP 102532 / B31) (Borrelia burgdorferi).